The following is a 448-amino-acid chain: Phosphoglucosamine mutase (448 aa).

Ser-100 functions as the Phosphoserine intermediate in the catalytic mechanism. Positions 100, 240, 242, and 244 each coordinate Mg(2+). Ser-100 is modified (phosphoserine).

Belongs to the phosphohexose mutase family. Mg(2+) is required as a cofactor. Post-translationally, activated by phosphorylation.

It carries out the reaction alpha-D-glucosamine 1-phosphate = D-glucosamine 6-phosphate. Functionally, catalyzes the conversion of glucosamine-6-phosphate to glucosamine-1-phosphate. The polypeptide is Phosphoglucosamine mutase (Bacillus mycoides (strain KBAB4) (Bacillus weihenstephanensis)).